The primary structure comprises 649 residues: Echinoderm microtubule-associated protein-like 2 (649 aa).

A tandem atypical propeller in EMLs region spans residues 10–649 (KEVIFSVEDG…DTSVLQWRVV (640 aa)). 2 coiled-coil regions span residues 13–58 (IFSV…LKLE) and 73–114 (YLLP…LAIH). WD repeat units lie at residues 56-93 (KLEW…LYSV), 97-144 (RQRH…IWDS), 151-192 (HVLG…VWDW), 195-234 (ETKV…FWTL), 241-280 (KRQG…VWGK), 285-323 (ITQA…LWGS), 369-406 (FSLL…LWSS), 410-447 (QPLW…LLDT), 452-489 (LVAI…VYTV), 495-535 (KVSR…YWDP), 564-602 (FGIW…LFSY), and 609-648 (ALSH…QWRV).

It belongs to the WD repeat EMAP family. Homotrimer; self-association is mediated by the N-terminal coiled coil. In terms of assembly, interacts with GRID2 and may also interact with GRID1. Interacts with EML3. Binds unpolymerized tubulins via its WD repeat region. Ubiquitous.

It is found in the cytoplasm. It localises to the cytoskeleton. Its subcellular location is the spindle. Functionally, tubulin binding protein that inhibits microtubule nucleation and growth, resulting in shorter microtubules. This is Echinoderm microtubule-associated protein-like 2 (EML2) from Homo sapiens (Human).